We begin with the raw amino-acid sequence, 809 residues long: Cyclic nucleotide-gated channel beta-3 (809 aa).

Disordered stretches follow at residues 1–121 (MFKS…PPAA) and 153–178 (GDLS…ESDD). Topologically, residues 1-218 (MFKSLTKVNK…SIDSYTDRLY (218 aa)) are cytoplasmic. A compositionally biased stretch (basic and acidic residues) spans 22 to 31 (QSSRRNEEGS). The span at 32 to 43 (HPSNQSQQTTAQ) shows a compositional bias: polar residues. Over residues 44–53 (EENKGEEKSL) the composition is skewed to basic and acidic residues. Polar residues predominate over residues 55 to 88 (TKSTPVTSEEPHTNIQDKLSKKNSSGDLTTNPDP). Residues 219 to 242 (LLWLLLVTLAYNWNCCFIPLRLVF) form a helical membrane-spanning segment. The Extracellular segment spans residues 243–249 (PYQTADN). Residues 250 to 270 (IHYWLIADIICDIIYLYDMLF) form a helical membrane-spanning segment. Residues 271–299 (IQPRLQFVRGGDIIVDSNELRKHYRTSTK) are Cytoplasmic-facing. Residues 300–317 (FQLDVASIIPFDICYLFF) form a helical membrane-spanning segment. Residues 318-320 (GFN) lie on the Extracellular side of the membrane. A helical membrane pass occupies residues 321 to 335 (PMFRANRMLKYTSFF). Over 336 to 348 (EFNHHLESIMDKA) the chain is Cytoplasmic. Residues 348 to 447 (AYIYRVIRTT…IGQMRDVIGA (100 aa)) form an ion conduction pathway region. The chain crosses the membrane as a helical span at residues 349-371 (YIYRVIRTTGYLLFILHINACVY). The Extracellular portion of the chain corresponds to 372–393 (YWASNYEGIGTTRWVYDGEGNE). 2 helical membrane passes run 394–420 (YLRC…LFEI) and 421–445 (VFQL…RDVI). The segment at 407 to 410 (TIGG) is selectivity filter. Residues 446–809 (GAATANQNYF…TIEVKEKAKQ (364 aa)) are Cytoplasmic-facing. The segment at 450–526 (ANQNYFRACM…SIISKVDLFK (77 aa)) is C-linker. Residues 530–646 (TQMIYDMLLR…ILMKKARVLL (117 aa)) form a cyclic nucleotide-binding domain region. Positions 591, 592, 604, and 605 each coordinate 3',5'-cyclic GMP. Residues 698-776 (QAAQKKENSE…PHSVRRTVLP (79 aa)) form a disordered region. Residues 716–755 (NEDKQKENEDKQKENEDKGKENEDKDKGREPEEKPLDRPE) are compositionally biased toward basic and acidic residues.

Belongs to the cyclic nucleotide-gated cation channel (TC 1.A.1.5) family. CNGB3 subfamily. As to quaternary structure, forms heterotetrameric channels composed of CNGA3 and CNGB3 subunits with 3:1 stoichiometry. In terms of tissue distribution, expressed specifically in the retina.

The protein localises to the cell membrane. The catalysed reaction is Ca(2+)(in) = Ca(2+)(out). It carries out the reaction Na(+)(in) = Na(+)(out). It catalyses the reaction K(+)(in) = K(+)(out). The enzyme catalyses NH4(+)(in) = NH4(+)(out). The catalysed reaction is Rb(+)(in) = Rb(+)(out). It carries out the reaction Li(+)(in) = Li(+)(out). It catalyses the reaction Cs(+)(in) = Cs(+)(out). In terms of biological role, pore-forming subunit of the cone cyclic nucleotide-gated channel. Mediates cone photoresponses at bright light converting transient changes in intracellular cGMP levels into electrical signals. In the dark, cGMP levels are high and keep the channel open enabling a steady inward current carried by Na(+) and Ca(2+) ions that leads to membrane depolarization and neurotransmitter release from synaptic terminals. Upon photon absorption cGMP levels decline leading to channel closure and membrane hyperpolarization that ultimately slows neurotransmitter release and signals the presence of light, the end point of the phototransduction cascade. Conducts cGMP- and cAMP-gated ion currents, with permeability for monovalent and divalent cations. This Homo sapiens (Human) protein is Cyclic nucleotide-gated channel beta-3.